Reading from the N-terminus, the 23-residue chain is Protein male-specific 40 (23 aa).

In terms of tissue distribution, during early embryogenesis expression is initially detected at the early cleavage stages in the nucleus of two discrete cells. Subsequently, expression is abundant in the cytoplasm of the newly formed pole cells. Male-specific expression during the third larval instar.

It localises to the cytoplasm. Its subcellular location is the nucleus. In Drosophila melanogaster (Fruit fly), this protein is Protein male-specific 40.